Here is a 260-residue protein sequence, read N- to C-terminus: Thiamine thiazole synthase (260 aa).

NAD(+) contacts are provided by residues Ala-36, 55–56 (EQ), Gly-63, and 154–156 (HVD). Fe cation contacts are provided by Asp-156 and His-171. Met-224 lines the NAD(+) pocket. Arg-234 contributes to the glycine binding site.

Belongs to the THI4 family. As to quaternary structure, homooctamer; tetramer of dimers. Fe(2+) is required as a cofactor.

The enzyme catalyses hydrogen sulfide + glycine + NAD(+) = ADP-5-ethyl-4-methylthiazole-2-carboxylate + nicotinamide + 3 H2O + H(+). It participates in cofactor biosynthesis; thiamine diphosphate biosynthesis. Functionally, involved in the biosynthesis of the thiazole moiety of thiamine. Catalyzes the conversion of NAD and glycine to adenosine diphosphate 5-(2-hydroxyethyl)-4-methylthiazole-2-carboxylate (ADT), an adenylated thiazole intermediate, using free sulfide as a source of sulfur. This Methanosarcina acetivorans (strain ATCC 35395 / DSM 2834 / JCM 12185 / C2A) protein is Thiamine thiazole synthase.